The sequence spans 663 residues: Zinc finger protein 44 (663 aa).

Positions Val52–Ser138 constitute a KRAB domain. The C2H2-type 1; atypical zinc finger occupies Tyr189 to His211. Residues Tyr217 to Lys239 form a C2H2-type 2; degenerate zinc finger. C2H2-type zinc fingers lie at residues Tyr245 to His267, Tyr273 to His295, Tyr301 to His323, Tyr329 to His351, Tyr357 to His379, His385 to His407, Tyr413 to His435, His441 to His463, Tyr469 to His491, Tyr497 to His518, Tyr524 to His546, Tyr552 to His574, Tyr580 to His602, Tyr608 to His630, and Tyr636 to His658.

It belongs to the krueppel C2H2-type zinc-finger protein family.

Its subcellular location is the nucleus. Its function is as follows. May be involved in transcriptional regulation. This is Zinc finger protein 44 (ZNF44) from Homo sapiens (Human).